We begin with the raw amino-acid sequence, 211 residues long: Glial cell line-derived neurotrophic factor (211 aa).

The N-terminal stretch at 1–19 (MKLWDVVAVCLVLLHTASA) is a signal peptide. Residues 20–75 (FPLPAGKRLLEAPAEDHSLGHRRVPFALTSDSNMPEDYPDQFDDVMDFIQATIKRL) constitute a propeptide that is removed on maturation. Positions 76 to 113 (KRSPDKQAAALPRRERNRQAAAASPENSRGKGRRGQRG) are disordered. 3 disulfides stabilise this stretch: cysteine 118/cysteine 179, cysteine 145/cysteine 208, and cysteine 149/cysteine 210. Asparagine 126 and asparagine 162 each carry an N-linked (GlcNAc...) asparagine glycan.

The protein belongs to the TGF-beta family. GDNF subfamily. In terms of assembly, homodimer; disulfide-linked. Interacts with GFRA1 coreceptor and RET: forms a 2:2:2 ternary complex composed of GDNF ligand, GFRA1 and RET receptor. Interacts (via propeptide) with SORL1 (via N-terminal ectodomain); this interaction affects GDNF-regulated, but not constitutive secretion. Also interacts with SORL1 in complex with GFRA1; this interaction leads to GDNF endocytosis and lysosomal degradation. In terms of tissue distribution, expressed in both the central nervous system (CNS) and in non-CNS tissues, including the kidney, lung, bone, heart, liver, spleen, sciatic nerve and blood. Expressed in brain (at protein level). Localizes at the proximal ligature of the hypoglossal nerve.

Its subcellular location is the secreted. In terms of biological role, neurotrophic factor that enhances survival and morphological differentiation of dopaminergic neurons and increases their high-affinity dopamine uptake. Acts by binding to its coreceptor, GFRA1, leading to autophosphorylation and activation of the RET receptor. May also modulate local neuronal effects in distal regions of the motor neuron. Involved in the development of the neural crest. This chain is Glial cell line-derived neurotrophic factor (Gdnf), found in Rattus norvegicus (Rat).